The chain runs to 181 residues: Adenine phosphoribosyltransferase (181 aa).

Belongs to the purine/pyrimidine phosphoribosyltransferase family. In terms of assembly, homodimer.

It is found in the cytoplasm. It catalyses the reaction AMP + diphosphate = 5-phospho-alpha-D-ribose 1-diphosphate + adenine. It participates in purine metabolism; AMP biosynthesis via salvage pathway; AMP from adenine: step 1/1. Catalyzes a salvage reaction resulting in the formation of AMP, that is energically less costly than de novo synthesis. The polypeptide is Adenine phosphoribosyltransferase (Brucella anthropi (strain ATCC 49188 / DSM 6882 / CCUG 24695 / JCM 21032 / LMG 3331 / NBRC 15819 / NCTC 12168 / Alc 37) (Ochrobactrum anthropi)).